We begin with the raw amino-acid sequence, 30 residues long: Uperin-6.1 (30 aa).

In terms of tissue distribution, expressed by the skin dorsal glands.

Its subcellular location is the secreted. The chain is Uperin-6.1 from Uperoleia inundata (Floodplain toadlet).